A 343-amino-acid chain; its full sequence is MGTADERRFEVLRAIVADFVATHEPIGSKSLVERHNLGVSSATIRNDMAVLEAEGYIAQPHTSSGRVPTEKGYREFVDRLDDVKPLSMVERRAIQGFLESGVDLDDVLRRAVRLLAQLTRQVAVVQYPTLSTSKVRHLEVIALTPARLLVVVITDSGRVDQRIVELGDVIDDHQLSQLRELLGQALEGKKLAAASVAVADFAGQLSGAGGLGDAVGRSATVLLESLVEHTEERLLMGGTANLTRNAADFGGSLRSILEALEEQIVVLRLLAAQQEAGKVTVRIGHETEAEQIVGTSMVSTAYGSNDTVYGGMGVLGPTRMDYPGTIASVAAVALYIGEVLGAR.

The protein belongs to the HrcA family.

Its function is as follows. Negative regulator of class I heat shock genes (grpE-dnaK-dnaJ and groELS operons). Prevents heat-shock induction of these operons. The protein is Heat-inducible transcription repressor HrcA of Mycobacterium ulcerans (strain Agy99).